Here is a 317-residue protein sequence, read N- to C-terminus: Melanocyte-stimulating hormone receptor (317 aa).

At 1–37 the chain is on the extracellular side; the sequence is MPVQGSQRRLLGSLNSTPTATPRLGLAANQTGARCLE. Asn-29 carries N-linked (GlcNAc...) asparagine glycosylation. The chain crosses the membrane as a helical span at residues 38–63; it reads VSIPDGLFLSLGLVSLVENVLVVVAI. At 64–72 the chain is on the cytoplasmic side; it reads ARNRNLHSP. The chain crosses the membrane as a helical span at residues 73-93; the sequence is MYCFICCLALSDLLVSGSNML. The Extracellular segment spans residues 94 to 118; the sequence is ETAVILLLEAGALAARAAVVQQLDN. The chain crosses the membrane as a helical span at residues 119 to 140; that stretch reads VIDVITCSSMLSSLCFLGAIAV. At 141–163 the chain is on the cytoplasmic side; sequence DRYISIFYALRYHSIVTLRRARR. The helical transmembrane segment at 164–183 threads the bilayer; it reads VVAAIWVASVLFSTLFIAYC. Residues 184–191 lie on the Extracellular side of the membrane; it reads DHAAVLLS. A helical transmembrane segment spans residues 192-211; sequence LVVFFLAMLVLMAVLYVHML. Residues 212 to 240 lie on the Cytoplasmic side of the membrane; sequence ARACQHAQGIAQLHKRQRPAHQGVGLKGA. The helical transmembrane segment at 241–266 threads the bilayer; it reads ATLTILLGIFFLCWGPFFLHLTLIVL. At 267 to 279 the chain is on the extracellular side; that stretch reads CPQHPTCSCIFKN. The chain crosses the membrane as a helical span at residues 280–300; the sequence is FNLFLTLIICNAIIDPLIYAF. Residues 301 to 317 are Cytoplasmic-facing; sequence RSQELRRTLKKVLLCSW. Cys-315 carries the S-palmitoyl cysteine lipid modification.

The protein belongs to the G-protein coupled receptor 1 family. Interacts with MGRN1, but does not undergo MGRN1-mediated ubiquitination; this interaction competes with GNAS-binding and thus inhibits agonist-induced cAMP production. Interacts with OPN3; the interaction results in a decrease in MC1R-mediated cAMP signaling and ultimately a decrease in melanin production in melanocytes.

The protein resides in the cell membrane. Its function is as follows. Receptor for MSH (alpha, beta and gamma) and ACTH. The activity of this receptor is mediated by G proteins which activate adenylate cyclase. Mediates melanogenesis, the production of eumelanin (black/brown) and phaeomelanin (red/yellow), via regulation of cAMP signaling in melanocytes. The protein is Melanocyte-stimulating hormone receptor (MC1R) of Trachypithecus auratus (Javan langur).